The chain runs to 496 residues: Ankyrin repeat domain-containing protein 34A (496 aa).

4 ANK repeats span residues 4 to 33, 37 to 72, 76 to 106, and 110 to 139; these read TEGH…YVNE, QGET…DPNI, LGRT…DPSV, and AGAS…AKGT. Position 15 is an N5-methylglutamine (Gln15). 2 stretches are compositionally biased toward polar residues: residues 147-162 and 180-191; these read DTSP…YLNS and FCTSPSEIQLQT. A disordered region spans residues 147-473; the sequence is DTSPSGTKKT…TKRKLVRRHS (327 aa). Positions 204–214 are enriched in basic and acidic residues; that stretch reads AQEEEEKRDVF. Pro residues predominate over residues 218–233; it reads LPKPPDDPSPSEPLPK. The span at 234–243 shows a compositional bias: basic residues; it reads PPRHPPKPLK. Thr316 carries the post-translational modification Phosphothreonine. Basic residues predominate over residues 463–473; it reads RTKRKLVRRHS.

It belongs to the ANKRD34 family. Methylated at Gln-15 by N6AMT1.

This is Ankyrin repeat domain-containing protein 34A (ANKRD34A) from Homo sapiens (Human).